The chain runs to 152 residues: Large ribosomal subunit protein bL9 (152 aa).

Belongs to the bacterial ribosomal protein bL9 family.

Binds to the 23S rRNA. The protein is Large ribosomal subunit protein bL9 of Mycobacterium leprae (strain Br4923).